The chain runs to 1226 residues: Methionine synthase (1226 aa).

The 321-residue stretch at 7–327 (KVQIEKQLSE…EHIRQMALVV (321 aa)) folds into the Hcy-binding domain. 3 residues coordinate Zn(2+): C249, C312, and C313. A Pterin-binding domain is found at 358–619 (FINVGERTNV…VPEDLREAVE (262 aa)). The B12-binding N-terminal domain occupies 652–746 (SALEWRDWPV…FINASKEVGA (95 aa)). Residues E696, 758–762 (GDVHD), H761, S806, T810, and A862 contribute to the methylcob(III)alamin site. A B12-binding domain is found at 748-883 (NGKILLATVK…SDELKPSFVE (136 aa)). The AdoMet activation domain maps to 899–1226 (KQPRTKPVTL…AEKWLGPNLN (328 aa)). S-adenosyl-L-methionine-binding positions include D949, R1137, and 1192-1193 (YF).

This sequence belongs to the vitamin-B12 dependent methionine synthase family. It depends on methylcob(III)alamin as a cofactor. The cofactor is Zn(2+).

The enzyme catalyses (6S)-5-methyl-5,6,7,8-tetrahydrofolate + L-homocysteine = (6S)-5,6,7,8-tetrahydrofolate + L-methionine. It participates in amino-acid biosynthesis; L-methionine biosynthesis via de novo pathway; L-methionine from L-homocysteine (MetH route): step 1/1. Functionally, catalyzes the transfer of a methyl group from methyl-cobalamin to homocysteine, yielding enzyme-bound cob(I)alamin and methionine. Subsequently, remethylates the cofactor using methyltetrahydrofolate. This is Methionine synthase (metH) from Aliivibrio fischeri (strain ATCC 700601 / ES114) (Vibrio fischeri).